The sequence spans 292 residues: Bifunctional protein FolD (292 aa).

Residues Gly-166–Ser-168, Ser-191, and Ile-232 contribute to the NADP(+) site.

The protein belongs to the tetrahydrofolate dehydrogenase/cyclohydrolase family. In terms of assembly, homodimer.

The enzyme catalyses (6R)-5,10-methylene-5,6,7,8-tetrahydrofolate + NADP(+) = (6R)-5,10-methenyltetrahydrofolate + NADPH. It carries out the reaction (6R)-5,10-methenyltetrahydrofolate + H2O = (6R)-10-formyltetrahydrofolate + H(+). Its pathway is one-carbon metabolism; tetrahydrofolate interconversion. Catalyzes the oxidation of 5,10-methylenetetrahydrofolate to 5,10-methenyltetrahydrofolate and then the hydrolysis of 5,10-methenyltetrahydrofolate to 10-formyltetrahydrofolate. The polypeptide is Bifunctional protein FolD (Wolbachia pipientis wMel).